The chain runs to 337 residues: Glyceraldehyde-3-phosphate dehydrogenase, cytosolic (337 aa).

NAD(+) contacts are provided by residues 13-14 (RI), D35, and R82. Residues 153–155 (SCT), T184, 213–214 (TG), and R236 each bind D-glyceraldehyde 3-phosphate. The active-site Nucleophile is the C154. N318 contributes to the NAD(+) binding site.

The protein belongs to the glyceraldehyde-3-phosphate dehydrogenase family. Homotetramer.

It is found in the cytoplasm. The catalysed reaction is D-glyceraldehyde 3-phosphate + phosphate + NAD(+) = (2R)-3-phospho-glyceroyl phosphate + NADH + H(+). The protein operates within carbohydrate degradation; glycolysis; pyruvate from D-glyceraldehyde 3-phosphate: step 1/5. Its function is as follows. Key enzyme in glycolysis that catalyzes the first step of the pathway by converting D-glyceraldehyde 3-phosphate (G3P) into 3-phospho-D-glyceroyl phosphate. Essential for the maintenance of cellular ATP levels and carbohydrate metabolism. This chain is Glyceraldehyde-3-phosphate dehydrogenase, cytosolic (GAPC), found in Antirrhinum majus (Garden snapdragon).